A 112-amino-acid chain; its full sequence is Large ribosomal subunit protein eL36y (112 aa).

Residues 79 to 88 are compositionally biased toward basic residues; it reads KLGTHKRAKR. The segment at 79–112 is disordered; sequence KLGTHKRAKRKREEMSSVLRKMRSGGGGATEKKK. Over residues 102–112 the composition is skewed to gly residues; it reads SGGGGATEKKK.

It belongs to the eukaryotic ribosomal protein eL36 family.

The chain is Large ribosomal subunit protein eL36y (RPL36B) from Arabidopsis thaliana (Mouse-ear cress).